The chain runs to 291 residues: ATP synthase gamma chain (291 aa).

Belongs to the ATPase gamma chain family. As to quaternary structure, F-type ATPases have 2 components, CF(1) - the catalytic core - and CF(0) - the membrane proton channel. CF(1) has five subunits: alpha(3), beta(3), gamma(1), delta(1), epsilon(1). CF(0) has three main subunits: a, b and c.

It localises to the cell membrane. Functionally, produces ATP from ADP in the presence of a proton gradient across the membrane. The gamma chain is believed to be important in regulating ATPase activity and the flow of protons through the CF(0) complex. The chain is ATP synthase gamma chain from Buchnera aphidicola subsp. Schizaphis graminum (strain Sg).